A 147-amino-acid chain; its full sequence is Small ribosomal subunit protein uS12 (147 aa).

It belongs to the universal ribosomal protein uS12 family. As to quaternary structure, part of the 30S ribosomal subunit.

In terms of biological role, with S4 and S5 plays an important role in translational accuracy. Located at the interface of the 30S and 50S subunits. This is Small ribosomal subunit protein uS12 from Pyrococcus abyssi (strain GE5 / Orsay).